The primary structure comprises 251 residues: Ubiquinone/menaquinone biosynthesis C-methyltransferase UbiE (251 aa).

S-adenosyl-L-methionine is bound by residues Thr74, Asp95, 123–124 (NA), and Ser140.

It belongs to the class I-like SAM-binding methyltransferase superfamily. MenG/UbiE family.

It carries out the reaction a 2-demethylmenaquinol + S-adenosyl-L-methionine = a menaquinol + S-adenosyl-L-homocysteine + H(+). The enzyme catalyses a 2-methoxy-6-(all-trans-polyprenyl)benzene-1,4-diol + S-adenosyl-L-methionine = a 5-methoxy-2-methyl-3-(all-trans-polyprenyl)benzene-1,4-diol + S-adenosyl-L-homocysteine + H(+). It functions in the pathway quinol/quinone metabolism; menaquinone biosynthesis; menaquinol from 1,4-dihydroxy-2-naphthoate: step 2/2. Its pathway is cofactor biosynthesis; ubiquinone biosynthesis. In terms of biological role, methyltransferase required for the conversion of demethylmenaquinol (DMKH2) to menaquinol (MKH2) and the conversion of 2-polyprenyl-6-methoxy-1,4-benzoquinol (DDMQH2) to 2-polyprenyl-3-methyl-6-methoxy-1,4-benzoquinol (DMQH2). The protein is Ubiquinone/menaquinone biosynthesis C-methyltransferase UbiE of Escherichia coli O1:K1 / APEC.